The following is a 252-amino-acid chain: Carboxy-S-adenosyl-L-methionine synthase (252 aa).

S-adenosyl-L-methionine contacts are provided by residues Tyr-45, 70 to 72, 95 to 96, 127 to 128, Asn-142, and Arg-209; these read GCS, DN, and DI.

The protein belongs to the class I-like SAM-binding methyltransferase superfamily. Cx-SAM synthase family. As to quaternary structure, homodimer.

It carries out the reaction prephenate + S-adenosyl-L-methionine = carboxy-S-adenosyl-L-methionine + 3-phenylpyruvate + H2O. In terms of biological role, catalyzes the conversion of S-adenosyl-L-methionine (SAM) to carboxy-S-adenosyl-L-methionine (Cx-SAM). The chain is Carboxy-S-adenosyl-L-methionine synthase from Pseudomonas paraeruginosa (strain DSM 24068 / PA7) (Pseudomonas aeruginosa (strain PA7)).